Consider the following 330-residue polypeptide: RNA/RNP complex-1-interacting phosphatase (330 aa).

Basic residues predominate over residues 1–12 (MSQWHHPRSGWG). The disordered stretch occupies residues 1-32 (MSQWHHPRSGWGRRRDFSGRSSAKKKGGNHIP). The region spanning 61 to 208 (FEKKLAPEEC…LQNGPIRKNW (148 aa)) is the Tyrosine-protein phosphatase domain. The active-site Phosphocysteine intermediate is the C152. 153–158 (THGLNR) contributes to the substrate binding site. R158 acts as the Proton donor/acceptor in catalysis.

This sequence belongs to the protein-tyrosine phosphatase family. Non-receptor class dual specificity subfamily. Monomer. May interact with SFRS7 and SFRS9/SRP30C.

The protein resides in the nucleus. It is found in the nucleus speckle. Possesses RNA 5'-triphosphatase and diphosphatase activities, but displays a poor protein-tyrosine phosphatase activity. In addition, has phosphatase activity with ATP, ADP and O-methylfluorescein phosphate (in vitro). Binds to RNA. May participate in nuclear mRNA metabolism. This chain is RNA/RNP complex-1-interacting phosphatase, found in Homo sapiens (Human).